Consider the following 364-residue polypeptide: Fructose-bisphosphate aldolase B (364 aa).

Alanine 2 carries the N-acetylalanine modification. At lysine 13 the chain carries N6-succinyllysine. At serine 36 the chain carries Phosphoserine. Position 39 is a phosphothreonine (threonine 39). Beta-D-fructose 1,6-bisphosphate is bound at residue arginine 43. At threonine 119 the chain carries Phosphothreonine. Lysine 121 carries the post-translational modification N6-succinyllysine. Position 132 is a phosphoserine (serine 132). The active-site Proton acceptor is the glutamate 188. Lysine 230 acts as the Schiff-base intermediate with dihydroxyacetone-P in catalysis. Phosphoserine occurs at positions 272, 276, 299, and 301. Position 272–274 (272–274) interacts with beta-D-fructose 1,6-bisphosphate; sequence SGG. Arginine 304 contacts beta-D-fructose 1,6-bisphosphate. Serine 309 carries the post-translational modification Phosphoserine. An N6-succinyllysine modification is found at lysine 317.

It belongs to the class I fructose-bisphosphate aldolase family. In terms of assembly, homotetramer. Interacts with BBS1, BBS2, BBS4 and BBS7. Forms a ternary complex with G6PD and TP53; this interaction is direct.

Its subcellular location is the cytoplasm. The protein resides in the cytosol. It localises to the cytoskeleton. The protein localises to the microtubule organizing center. It is found in the centrosome. Its subcellular location is the centriolar satellite. The enzyme catalyses beta-D-fructose 1,6-bisphosphate = D-glyceraldehyde 3-phosphate + dihydroxyacetone phosphate. The catalysed reaction is beta-D-fructose 1-phosphate = D-glyceraldehyde + dihydroxyacetone phosphate. It participates in carbohydrate degradation; glycolysis; D-glyceraldehyde 3-phosphate and glycerone phosphate from D-glucose: step 4/4. The protein operates within carbohydrate biosynthesis; gluconeogenesis. Its pathway is carbohydrate metabolism; fructose metabolism. Its function is as follows. Catalyzes the aldol cleavage of fructose 1,6-biphosphate to form two triosephosphates dihydroxyacetone phosphate and D-glyceraldehyde 3-phosphate in glycolysis as well as the reverse stereospecific aldol addition reaction in gluconeogenesis. In fructolysis, metabolizes fructose 1-phosphate derived from the phosphorylation of dietary fructose by fructokinase into dihydroxyacetone phosphate and D-glyceraldehyde. Acts as an adapter independently of its enzymatic activity, exerts a tumor suppressor role by stabilizing the ternary complex with G6PD and TP53 to inhibit G6PD activity and keep oxidative pentose phosphate metabolism in check. This Bos taurus (Bovine) protein is Fructose-bisphosphate aldolase B (ALDOB).